We begin with the raw amino-acid sequence, 163 residues long: Putative 4-hydroxy-4-methyl-2-oxoglutarate aldolase (163 aa).

Substrate-binding positions include 76–79 (GDMI) and arginine 98. Position 99 (aspartate 99) interacts with a divalent metal cation.

Belongs to the class II aldolase/RraA-like family. As to quaternary structure, homotrimer. A divalent metal cation is required as a cofactor.

It catalyses the reaction 4-hydroxy-4-methyl-2-oxoglutarate = 2 pyruvate. The enzyme catalyses oxaloacetate + H(+) = pyruvate + CO2. In terms of biological role, catalyzes the aldol cleavage of 4-hydroxy-4-methyl-2-oxoglutarate (HMG) into 2 molecules of pyruvate. Also contains a secondary oxaloacetate (OAA) decarboxylase activity due to the common pyruvate enolate transition state formed following C-C bond cleavage in the retro-aldol and decarboxylation reactions. In Pseudomonas fluorescens (strain SBW25), this protein is Putative 4-hydroxy-4-methyl-2-oxoglutarate aldolase.